The sequence spans 259 residues: 3-deoxy-manno-octulosonate cytidylyltransferase (259 aa).

Belongs to the KdsB family.

Its subcellular location is the cytoplasm. It carries out the reaction 3-deoxy-alpha-D-manno-oct-2-ulosonate + CTP = CMP-3-deoxy-beta-D-manno-octulosonate + diphosphate. It participates in nucleotide-sugar biosynthesis; CMP-3-deoxy-D-manno-octulosonate biosynthesis; CMP-3-deoxy-D-manno-octulosonate from 3-deoxy-D-manno-octulosonate and CTP: step 1/1. The protein operates within bacterial outer membrane biogenesis; lipopolysaccharide biosynthesis. Functionally, activates KDO (a required 8-carbon sugar) for incorporation into bacterial lipopolysaccharide in Gram-negative bacteria. In Protochlamydia amoebophila (strain UWE25), this protein is 3-deoxy-manno-octulosonate cytidylyltransferase.